A 143-amino-acid polypeptide reads, in one-letter code: Large ribosomal subunit protein uL13 (143 aa).

Belongs to the universal ribosomal protein uL13 family. As to quaternary structure, part of the 50S ribosomal subunit.

Functionally, this protein is one of the early assembly proteins of the 50S ribosomal subunit, although it is not seen to bind rRNA by itself. It is important during the early stages of 50S assembly. In Albidiferax ferrireducens (strain ATCC BAA-621 / DSM 15236 / T118) (Rhodoferax ferrireducens), this protein is Large ribosomal subunit protein uL13.